Reading from the N-terminus, the 116-residue chain is Large ribosomal subunit protein uL18 (116 aa).

It belongs to the universal ribosomal protein uL18 family. Part of the 50S ribosomal subunit; part of the 5S rRNA/L5/L18/L25 subcomplex. Contacts the 5S and 23S rRNAs.

This is one of the proteins that bind and probably mediate the attachment of the 5S RNA into the large ribosomal subunit, where it forms part of the central protuberance. This Acholeplasma laidlawii (strain PG-8A) protein is Large ribosomal subunit protein uL18.